Here is a 439-residue protein sequence, read N- to C-terminus: MTEFFKNINKIQFEGTDAINPLAFRHYDAERMILGKSMKEHLRFAACYWHNFCWPGSDVFGAATFDRPWLQSGNAMEMAHMKADAAFDFFSKLGVPYYCFHDTDIAPEGTSLKEYVNNFAQMVDVLEQKQDETGLKLLWGTANAFSNPRYMSGAGTNPDPKVFAYAATQIFNAMGATQRLGGENYVLWGGREGYETLLNTDLRQEREQLGRLMQMVVEHKHKIGFKGTILIEPKPQEPTKHQYDYDTATVYGFLKQFGLENEIKVNIEANHATLAGHSFQHEIATATSLGLFGSIDANRGDPQLGWDTDQFPNSVEENTLVMYEILKAGGFTTGGFNFDSHVRRPSIDAEDLFYGHIGGMDTMALALERAANMIENDVLSKNIAQRYAGWNEDLGKKILSGDHSLETLAKFALDSNIAPVKESGRQEHLENIVNGFIYK.

Active-site residues include His101 and Asp104. Mg(2+)-binding residues include Glu232, Glu268, His271, Asp296, Asp307, Asp309, and Asp339.

This sequence belongs to the xylose isomerase family. In terms of assembly, homotetramer. It depends on Mg(2+) as a cofactor.

It is found in the cytoplasm. The enzyme catalyses alpha-D-xylose = alpha-D-xylulofuranose. The sequence is that of Xylose isomerase from Photobacterium profundum (strain SS9).